A 428-amino-acid chain; its full sequence is D-amino acid dehydrogenase (428 aa).

3 to 17 contacts FAD; sequence VVVLGSGVVGVASAY.

This sequence belongs to the DadA oxidoreductase family. Requires FAD as cofactor.

It carries out the reaction a D-alpha-amino acid + A + H2O = a 2-oxocarboxylate + AH2 + NH4(+). It functions in the pathway amino-acid degradation; D-alanine degradation; NH(3) and pyruvate from D-alanine: step 1/1. In terms of biological role, oxidative deamination of D-amino acids. This Burkholderia ambifaria (strain MC40-6) protein is D-amino acid dehydrogenase.